The sequence spans 649 residues: ATP-dependent DNA helicase Q1 (649 aa).

One can recognise a Helicase ATP-binding domain in the interval 100 to 275 (INVTMAGKEV…QKILCIEKCF (176 aa)). 113-120 (MPTGGGKG) contacts ATP. A DEVH box motif is present at residues 219–222 (DEVH). Residues 300–451 (FIEDIVKLIN…EMVSYCQNIS (152 aa)) form the Helicase C-terminal domain. Zn(2+) is bound by residues cysteine 453, cysteine 471, cysteine 475, and cysteine 478. An N6-acetyllysine mark is found at lysine 514 and lysine 522. Phosphoserine occurs at positions 597 and 602. Residues 597 to 608 (SFRVESSQTCHS) show a composition bias toward polar residues. Positions 597–649 (SFRVESSQTCHSEQGDKKMEEKNSGNFQKKAANMLQQSGSKNTGAKKRKIDDA) are disordered. The span at 609-619 (EQGDKKMEEKN) shows a compositional bias: basic and acidic residues. Residues 630-639 (MLQQSGSKNT) are compositionally biased toward polar residues. At serine 634 the chain carries Phosphoserine. Residues 640-649 (GAKKRKIDDA) show a composition bias toward basic residues.

This sequence belongs to the helicase family. RecQ subfamily. May form homodimers or higher order oligomers. Interacts with EXO1. Interacts with MLH1. Interacts with PARP1. Mg(2+) serves as cofactor. Requires Mn(2+) as cofactor. The cofactor is Zn(2+).

The protein localises to the nucleus. It carries out the reaction Couples ATP hydrolysis with the unwinding of duplex DNA by translocating in the 3'-5' direction.. The catalysed reaction is ATP + H2O = ADP + phosphate + H(+). The enzyme catalyses dATP + H2O = dADP + phosphate + H(+). DNA helicase that plays a role in DNA damage repair and genome stability. Exhibits a magnesium- and ATP-dependent DNA-helicase activity that unwinds single- and double-stranded DNA in a 3'-5' direction. Plays a role in restoring regressed replication forks. Required to restart stalled replication forks induced by abortive topoisomerase 1 and 2 lesions. May play a role in the repair of DNA that is damaged by ultraviolet light or other mutagens. This chain is ATP-dependent DNA helicase Q1 (RECQL), found in Pongo abelii (Sumatran orangutan).